We begin with the raw amino-acid sequence, 625 residues long: 1,4-alpha-glucan branching enzyme GlgB (625 aa).

The active-site Nucleophile is aspartate 302. Glutamate 355 serves as the catalytic Proton donor.

This sequence belongs to the glycosyl hydrolase 13 family. GlgB subfamily. Monomer.

It carries out the reaction Transfers a segment of a (1-&gt;4)-alpha-D-glucan chain to a primary hydroxy group in a similar glucan chain.. Its pathway is glycan biosynthesis; glycogen biosynthesis. In terms of biological role, catalyzes the formation of the alpha-1,6-glucosidic linkages in glycogen by scission of a 1,4-alpha-linked oligosaccharide from growing alpha-1,4-glucan chains and the subsequent attachment of the oligosaccharide to the alpha-1,6 position. In Albidiferax ferrireducens (strain ATCC BAA-621 / DSM 15236 / T118) (Rhodoferax ferrireducens), this protein is 1,4-alpha-glucan branching enzyme GlgB.